A 75-amino-acid polypeptide reads, in one-letter code: Putative antitoxin PH1062.1 (75 aa).

This sequence belongs to the UPF0330 family.

In terms of biological role, possibly the antitoxin component of a type II toxin-antitoxin (TA) system. This is Putative antitoxin PH1062.1 from Pyrococcus horikoshii (strain ATCC 700860 / DSM 12428 / JCM 9974 / NBRC 100139 / OT-3).